Here is a 572-residue protein sequence, read N- to C-terminus: Phosphoenolpyruvate-protein phosphotransferase (572 aa).

Catalysis depends on His191, which acts as the Tele-phosphohistidine intermediate. Phosphoenolpyruvate contacts are provided by Arg298 and Arg334. Residues Glu433 and Asp457 each coordinate Mg(2+). Residues 456–457 and Arg467 each bind phosphoenolpyruvate; that span reads ND. Cys504 (proton donor) is an active-site residue.

It belongs to the PEP-utilizing enzyme family. Homodimer. It depends on Mg(2+) as a cofactor.

It localises to the cytoplasm. It carries out the reaction L-histidyl-[protein] + phosphoenolpyruvate = N(pros)-phospho-L-histidyl-[protein] + pyruvate. General (non sugar-specific) component of the phosphoenolpyruvate-dependent sugar phosphotransferase system (sugar PTS). This major carbohydrate active-transport system catalyzes the phosphorylation of incoming sugar substrates concomitantly with their translocation across the cell membrane. Enzyme I transfers the phosphoryl group from phosphoenolpyruvate (PEP) to the phosphoryl carrier protein (HPr). The polypeptide is Phosphoenolpyruvate-protein phosphotransferase (Staphylococcus aureus (strain MSSA476)).